Reading from the N-terminus, the 311-residue chain is tRNA-cytidine(32) 2-sulfurtransferase (311 aa).

Residues 47-52 (SGGKDS) carry the PP-loop motif motif. [4Fe-4S] cluster-binding residues include cysteine 122, cysteine 125, and cysteine 213.

The protein belongs to the TtcA family. In terms of assembly, homodimer. Requires Mg(2+) as cofactor. [4Fe-4S] cluster serves as cofactor.

The protein localises to the cytoplasm. It carries out the reaction cytidine(32) in tRNA + S-sulfanyl-L-cysteinyl-[cysteine desulfurase] + AH2 + ATP = 2-thiocytidine(32) in tRNA + L-cysteinyl-[cysteine desulfurase] + A + AMP + diphosphate + H(+). It participates in tRNA modification. Its function is as follows. Catalyzes the ATP-dependent 2-thiolation of cytidine in position 32 of tRNA, to form 2-thiocytidine (s(2)C32). The sulfur atoms are provided by the cysteine/cysteine desulfurase (IscS) system. This Escherichia fergusonii (strain ATCC 35469 / DSM 13698 / CCUG 18766 / IAM 14443 / JCM 21226 / LMG 7866 / NBRC 102419 / NCTC 12128 / CDC 0568-73) protein is tRNA-cytidine(32) 2-sulfurtransferase.